Consider the following 600-residue polypeptide: Netrin-1 (600 aa).

Positions 1–24 (MMRAMWEALAALAAVSCLVGAVRG) are cleaved as a signal peptide. Positions 47-284 (HPRRCIPDFV…AVSDLQVGGR (238 aa)) constitute a Laminin N-terminal domain. Residues Asn-95, Asn-116, and Asn-131 are each glycosylated (N-linked (GlcNAc...) asparagine). 14 disulfides stabilise this stretch: Cys-119-Cys-152, Cys-285-Cys-294, Cys-287-Cys-304, Cys-306-Cys-315, Cys-318-Cys-338, Cys-341-Cys-350, Cys-343-Cys-368, Cys-371-Cys-380, Cys-383-Cys-401, Cys-404-Cys-416, Cys-406-Cys-423, Cys-425-Cys-434, Cys-437-Cys-451, and Cys-472-Cys-544. 3 Laminin EGF-like domains span residues 285–340 (CKCN…ECVA), 341–403 (CNCN…ACKA), and 404–453 (CDCH…PCIK). Asn-417 carries an N-linked (GlcNAc...) asparagine glycan. An NTR domain is found at 472–600 (CDSYCKASKG…KFQQREKKEL (129 aa)). The Cell attachment site signature appears at 530-532 (RGD).

In terms of assembly, binds to its receptors; DCC, UNC5A, UNC5B, UNC5C and probably UNC5D. Binds to its receptor; DSCAM. Interacts with APP.

It localises to the secreted. Its subcellular location is the cytoplasm. Netrins control guidance of CNS commissural axons and peripheral motor axons. Its association with either DCC or some UNC5 receptors will lead to axon attraction or repulsion, respectively. Binding to UNC5C might cause dissociation of UNC5C from polymerized TUBB3 in microtubules and thereby lead to increased microtubule dynamics and axon repulsion. Involved in dorsal root ganglion axon projection towards the spinal cord. It also serves as a survival factor via its association with its receptors which prevent the initiation of apoptosis. Involved in colorectal tumorigenesis by regulating apoptosis. The polypeptide is Netrin-1 (NTN1) (Sus scrofa (Pig)).